A 310-amino-acid chain; its full sequence is N-acyl-aromatic-L-amino acid amidohydrolase (carboxylate-forming) (310 aa).

His-20 and Glu-23 together coordinate Zn(2+). Residues Arg-62 and 69–70 each bind substrate; that span reads NR. His-113 is a binding site for Zn(2+). Substrate-binding residues include Glu-176 and Tyr-286.

Belongs to the AspA/AstE family. Aspartoacylase subfamily. In terms of assembly, homotetramer. Zn(2+) serves as cofactor.

Its subcellular location is the apical cell membrane. It localises to the cytoplasm. It carries out the reaction an N-acyl-aromatic L-alpha-amino acid + H2O = an aromatic L-alpha-amino acid + a carboxylate. It catalyses the reaction an N-acetyl-L-cysteine-S-conjugate + H2O = an S-substituted L-cysteine + acetate. Its function is as follows. Plays an important role in deacetylating mercapturic acids in kidney proximal tubules. In Xenopus tropicalis (Western clawed frog), this protein is N-acyl-aromatic-L-amino acid amidohydrolase (carboxylate-forming) (acy3).